The following is a 351-amino-acid chain: Probable dual-specificity RNA methyltransferase RlmN (351 aa).

The active-site Proton acceptor is the Glu-97. In terms of domain architecture, Radical SAM core spans 103–337 (YDYGNTVCIS…VTVRKERGVD (235 aa)). Cysteines 110 and 342 form a disulfide. [4Fe-4S] cluster-binding residues include Cys-117, Cys-121, and Cys-124. S-adenosyl-L-methionine contacts are provided by residues 166-167 (GE), Ser-198, 221-223 (SLH), and Asn-299. Cys-342 acts as the S-methylcysteine intermediate in catalysis.

It belongs to the radical SAM superfamily. RlmN family. [4Fe-4S] cluster serves as cofactor.

Its subcellular location is the cytoplasm. The catalysed reaction is adenosine(2503) in 23S rRNA + 2 reduced [2Fe-2S]-[ferredoxin] + 2 S-adenosyl-L-methionine = 2-methyladenosine(2503) in 23S rRNA + 5'-deoxyadenosine + L-methionine + 2 oxidized [2Fe-2S]-[ferredoxin] + S-adenosyl-L-homocysteine. It carries out the reaction adenosine(37) in tRNA + 2 reduced [2Fe-2S]-[ferredoxin] + 2 S-adenosyl-L-methionine = 2-methyladenosine(37) in tRNA + 5'-deoxyadenosine + L-methionine + 2 oxidized [2Fe-2S]-[ferredoxin] + S-adenosyl-L-homocysteine. In terms of biological role, specifically methylates position 2 of adenine 2503 in 23S rRNA and position 2 of adenine 37 in tRNAs. This is Probable dual-specificity RNA methyltransferase RlmN from Natranaerobius thermophilus (strain ATCC BAA-1301 / DSM 18059 / JW/NM-WN-LF).